Reading from the N-terminus, the 552-residue chain is Arginine--tRNA ligase (552 aa).

Positions 130–140 (ANPTGPLSIGH) match the 'HIGH' region motif.

The protein belongs to the class-I aminoacyl-tRNA synthetase family. Monomer.

The protein resides in the cytoplasm. It catalyses the reaction tRNA(Arg) + L-arginine + ATP = L-arginyl-tRNA(Arg) + AMP + diphosphate. The chain is Arginine--tRNA ligase from Desulfotalea psychrophila (strain LSv54 / DSM 12343).